The chain runs to 136 residues: Large ribosomal subunit protein uL16 (136 aa).

The protein belongs to the universal ribosomal protein uL16 family. Part of the 50S ribosomal subunit.

Binds 23S rRNA and is also seen to make contacts with the A and possibly P site tRNAs. This is Large ribosomal subunit protein uL16 from Shewanella piezotolerans (strain WP3 / JCM 13877).